We begin with the raw amino-acid sequence, 282 residues long: V-set domain-containing T-cell activation inhibitor 1 (282 aa).

Residues Met1–Ala24 form the signal peptide. Residues Leu25 to Ser259 are Extracellular-facing. 2 consecutive Ig-like V-type domains span residues His35–Lys146 and Pro153–Thr241. Intrachain disulfides connect Cys56/Cys130 and Cys168/Cys225. Asn216 carries N-linked (GlcNAc...) asparagine glycosylation. Residues Leu260–Met280 form a helical membrane-spanning segment. Residues Leu281 to Lys282 lie on the Cytoplasmic side of the membrane.

The protein belongs to the immunoglobulin superfamily. BTN/MOG family. Post-translationally, N-glycosylated. Overexpressed in breast, ovarian, endometrial, renal cell (RCC) and non-small-cell lung cancers (NSCLC). Expressed on activated T- and B-cells, monocytes and dendritic cells, but not expressed in most normal tissues (at protein level). Widely expressed, including in kidney, liver, lung, ovary, placenta, spleen and testis.

Its subcellular location is the cell membrane. Negatively regulates T-cell-mediated immune response by inhibiting T-cell activation, proliferation, cytokine production and development of cytotoxicity. When expressed on the cell surface of tumor macrophages, plays an important role, together with regulatory T-cells (Treg), in the suppression of tumor-associated antigen-specific T-cell immunity. Involved in promoting epithelial cell transformation. In Homo sapiens (Human), this protein is V-set domain-containing T-cell activation inhibitor 1.